The following is a 384-amino-acid chain: 5-amino-6-(D-ribitylamino)uracil--L-tyrosine 4-hydroxyphenyl transferase 2 (384 aa).

A Radical SAM core domain is found at 53–286 (VSYVVNRNIY…IAISRVILHT (234 aa)). [4Fe-4S] cluster-binding residues include Cys67, Cys71, and Cys74.

It belongs to the radical SAM superfamily. CofH family. In terms of assembly, consists of two subunits, CofG and CofH. Requires [4Fe-4S] cluster as cofactor.

The catalysed reaction is 5-amino-6-(D-ribitylamino)uracil + L-tyrosine + S-adenosyl-L-methionine = 5-amino-5-(4-hydroxybenzyl)-6-(D-ribitylimino)-5,6-dihydrouracil + 2-iminoacetate + 5'-deoxyadenosine + L-methionine + H(+). Its pathway is cofactor biosynthesis; coenzyme F0 biosynthesis. In terms of biological role, catalyzes the radical-mediated synthesis of 5-amino-5-(4-hydroxybenzyl)-6-(D-ribitylimino)-5,6-dihydrouracil from 5-amino-6-(D-ribitylamino)uracil and L-tyrosine. The protein is 5-amino-6-(D-ribitylamino)uracil--L-tyrosine 4-hydroxyphenyl transferase 2 of Methanosarcina mazei (strain ATCC BAA-159 / DSM 3647 / Goe1 / Go1 / JCM 11833 / OCM 88) (Methanosarcina frisia).